A 644-amino-acid chain; its full sequence is Sodium/hydrogen exchanger 9 (644 aa).

The Lumenal segment spans residues 1 to 20; sequence MAGQLRFTSGKDEDHFQHQG. Residues 21 to 41 traverse the membrane as a helical segment; sequence AVELLAFNFLLILTILTIWLF. The Cytoplasmic portion of the chain corresponds to 42–45; it reads KNHR. The chain crosses the membrane as a helical span at residues 46–66; that stretch reads FRFLHETGGAMVYGLIMGLIL. Residues 67–126 are Lumenal-facing; the sequence is RYATAPTDIDSGTVYNCGNLFFSPSTLLVNITDQVYEYKYQREINQHNISPHQGNAILEK. The chain crosses the membrane as a helical span at residues 127 to 147; the sequence is MTFDPEIFFNVLLPPIIFHAG. The Cytoplasmic portion of the chain corresponds to 148–164; sequence YSLKKRHFFQNLGSILT. The chain crosses the membrane as a helical span at residues 165–185; that stretch reads YAFLGTAISCVVIGLIMYGFV. Residues 186 to 203 are Lumenal-facing; the sequence is KAMVHAGQLKSGDFHFTD. A helical membrane pass occupies residues 204–224; sequence CLFFGSLMSATDPVTVLAIFH. Over 225 to 235 the chain is Cytoplasmic; that stretch reads ELHVDPDLYTL. The chain crosses the membrane as a helical span at residues 236 to 256; it reads LFGESVLNDAVAIVLTYSISI. Residues 257 to 277 are Lumenal-facing; the sequence is YSPKENPNAFDTAAFFQSVGN. A helical transmembrane segment spans residues 278-298; the sequence is FLGIFAGSFAMGSAYAVVTAL. Topologically, residues 299 to 309 are cytoplasmic; that stretch reads LTKFTKLREFP. The chain crosses the membrane as a helical span at residues 310 to 327; sequence MLETGLFFLLSWSAFLSA. Residues 328-333 lie on the Lumenal side of the membrane; that stretch reads EAAGLT. The chain crosses the membrane as a helical span at residues 334-350; it reads GIVAVLFCGVTQAHYTY. Residues 351 to 364 are Cytoplasmic-facing; that stretch reads NNLSSDSKLRTKQL. The helical transmembrane segment at 365–385 threads the bilayer; the sequence is FEFMNFLAENVIFCYMGLALF. Residue T386 is a topological domain, lumenal. The chain crosses the membrane as a helical span at residues 387–407; it reads FQNHIFNALFILGAFLAIFVA. The Cytoplasmic segment spans residues 408–429; sequence RACNIYPLSFLLNLGRKQKIPW. The chain crosses the membrane as a helical span at residues 430 to 450; it reads NFQHMMMFSGLRGAIAFALAI. Residues 451–465 lie on the Lumenal side of the membrane; it reads RNTESQPKQMMFTTT. The helical transmembrane segment at 466–486 threads the bilayer; it reads LLLVFFTVWVFGGGTTPMLTW. Residues 487–644 are Cytoplasmic-facing; that stretch reads LQIRVGVDLD…EQTRGQPQMD (158 aa). Residues 590–644 are disordered; it reads YQEQSPSPSSPTTKLALDQKSSGQTPGKENIYEGDLGLGGYDLKLEQTRGQPQMD.

The protein belongs to the monovalent cation:proton antiporter 1 (CPA1) transporter (TC 2.A.36) family. As to quaternary structure, homodimer; phosphatidylinositol-4,5-bisphosphate (PIP2) and phosphatidylinositol 3,4,5-trisphosphate (PIP3) could be involved in the dimer stabilization. Interacts (via the C-terminus) with RACK1. Interacts with CHP1. As to expression, expressed in the brain. Highly expressed in immune cells, specifically macrophages.

The protein resides in the late endosome membrane. The protein localises to the cell membrane. It is found in the early endosome membrane. Its subcellular location is the recycling endosome membrane. It localises to the cytoplasmic vesicle. The protein resides in the phagosome membrane. It catalyses the reaction Na(+)(in) + H(+)(out) = Na(+)(out) + H(+)(in). It carries out the reaction K(+)(in) + H(+)(out) = K(+)(out) + H(+)(in). Endosomal Na(+), K(+)/H(+) antiporter. Mediates the electroneutral exchange of endosomal luminal H(+) for a cytosolic Na(+) or K(+). By facilitating proton efflux, SLC9A9 counteracts the acidity generated by vacuolar (V)-ATPase, thereby limiting luminal acidification. Regulates organellar pH and consequently, endosome maturation and endocytic trafficking of plasma membrane receptors and neurotransporters. Promotes the recycling of transferrin receptors back to the cell surface to facilitate additional iron uptake in the brain. Regulates synaptic transmission by regulating the luminal pH of axonal endosomes. Regulates phagosome lumenal pH, thus affecting phagosome maturation, and consequently, microbicidal activity in macrophages. Can also be active at the cell surface of specialized cells, e.g., in the inner ear hair bundles uses the high K(+) of the endolymph to regulate intracelular pH. This chain is Sodium/hydrogen exchanger 9 (Slc9a9), found in Mus musculus (Mouse).